Here is a 226-residue protein sequence, read N- to C-terminus: Probable transcriptional regulatory protein y4xI (226 aa).

In terms of domain architecture, Response regulatory spans 1-114 (MRTLLVDTDL…ELIARMRALL (114 aa)). Positions 122-220 (CPIIEFGNLH…VRGIGYTLEL (99 aa)) form a DNA-binding region, ompR/PhoB-type.

It is found in the cytoplasm. The sequence is that of Probable transcriptional regulatory protein y4xI from Sinorhizobium fredii (strain NBRC 101917 / NGR234).